The chain runs to 225 residues: Large ribosomal subunit protein uL1 (225 aa).

Belongs to the universal ribosomal protein uL1 family. In terms of assembly, part of the 50S ribosomal subunit.

Its function is as follows. Binds directly to 23S rRNA. The L1 stalk is quite mobile in the ribosome, and is involved in E site tRNA release. Protein L1 is also a translational repressor protein, it controls the translation of the L11 operon by binding to its mRNA. The chain is Large ribosomal subunit protein uL1 from Rhodopirellula baltica (strain DSM 10527 / NCIMB 13988 / SH1).